Reading from the N-terminus, the 491-residue chain is Cytochrome P450 2H1 (491 aa).

Cys-436 contributes to the heme binding site.

Belongs to the cytochrome P450 family. It depends on heme as a cofactor. As to expression, expressed in liver.

It localises to the endoplasmic reticulum membrane. Its subcellular location is the microsome membrane. The catalysed reaction is an organic molecule + reduced [NADPH--hemoprotein reductase] + O2 = an alcohol + oxidized [NADPH--hemoprotein reductase] + H2O + H(+). In terms of biological role, cytochromes P450 are a group of heme-thiolate monooxygenases. In liver microsomes, this enzyme is involved in an NADPH-dependent electron transport pathway. It oxidizes a variety of structurally unrelated compounds, including steroids, fatty acids, and xenobiotics. This Gallus gallus (Chicken) protein is Cytochrome P450 2H1 (CYP2H1).